A 142-amino-acid polypeptide reads, in one-letter code: Fluoride-specific ion channel FluC 1 (142 aa).

4 consecutive transmembrane segments (helical) span residues 23 to 43 (VNIA…YLID), 54 to 74 (LPLG…GLIG), 79 to 99 (GWLL…FSTF), and 116 to 136 (LGNV…AVSL). Gly-91 and Thr-94 together coordinate Na(+).

The protein belongs to the fluoride channel Fluc/FEX (TC 1.A.43) family.

The protein resides in the cell membrane. The enzyme catalyses fluoride(in) = fluoride(out). Its activity is regulated as follows. Na(+) is not transported, but it plays an essential structural role and its presence is essential for fluoride channel function. Functionally, fluoride-specific ion channel. Important for reducing fluoride concentration in the cell, thus reducing its toxicity. The protein is Fluoride-specific ion channel FluC 1 of Nocardia farcinica (strain IFM 10152).